We begin with the raw amino-acid sequence, 781 residues long: Beta-mannosyltransferase 4 (781 aa).

The Cytoplasmic segment spans residues 1 to 17; that stretch reads MTKSYMPLFRSPRQFKK. Residues 18-38 traverse the membrane as a helical segment; sequence IYFILIPLILAVIILHVFFDG. The Extracellular portion of the chain corresponds to 39–781; that stretch reads FNKISEYSPT…EKEDDDDIEV (743 aa). Residues 640–733 adopt a coiled-coil conformation; it reads KLGDSEAAIK…AKDEDKNEDE (94 aa). 2 stretches are compositionally biased toward basic and acidic residues: residues 663-728 and 736-750; these read KAEK…KDED and KEKN…KSEV. The segment at 663–781 is disordered; sequence KAEKEKAEKE…EKEDDDDIEV (119 aa). Over residues 751–781 the composition is skewed to acidic residues; the sequence is EENGENTNEGGEDDGDGDGEEEKEDDDDIEV.

It belongs to the BMT family.

Its subcellular location is the membrane. Beta-mannosyltransferase involved in cell wall biosynthesis. Required for the elongation of beta-mannose chains on the acid-labile fraction of cell wall phosphopeptidomannan. The polypeptide is Beta-mannosyltransferase 4 (BMT4) (Candida albicans (strain SC5314 / ATCC MYA-2876) (Yeast)).